The following is a 336-amino-acid chain: Phosphate acyltransferase (336 aa).

Belongs to the PlsX family. As to quaternary structure, homodimer. Probably interacts with PlsY.

It localises to the cytoplasm. The catalysed reaction is a fatty acyl-[ACP] + phosphate = an acyl phosphate + holo-[ACP]. Its pathway is lipid metabolism; phospholipid metabolism. Functionally, catalyzes the reversible formation of acyl-phosphate (acyl-PO(4)) from acyl-[acyl-carrier-protein] (acyl-ACP). This enzyme utilizes acyl-ACP as fatty acyl donor, but not acyl-CoA. This chain is Phosphate acyltransferase, found in Dictyoglomus thermophilum (strain ATCC 35947 / DSM 3960 / H-6-12).